Consider the following 506-residue polypeptide: Bifunctional purine biosynthesis protein PurH (506 aa).

The MGS-like domain maps to 1 to 146 (MARLALLSVS…KNFAHLTVLC (146 aa)).

The protein belongs to the PurH family.

It catalyses the reaction (6R)-10-formyltetrahydrofolate + 5-amino-1-(5-phospho-beta-D-ribosyl)imidazole-4-carboxamide = 5-formamido-1-(5-phospho-D-ribosyl)imidazole-4-carboxamide + (6S)-5,6,7,8-tetrahydrofolate. It carries out the reaction IMP + H2O = 5-formamido-1-(5-phospho-D-ribosyl)imidazole-4-carboxamide. It participates in purine metabolism; IMP biosynthesis via de novo pathway; 5-formamido-1-(5-phospho-D-ribosyl)imidazole-4-carboxamide from 5-amino-1-(5-phospho-D-ribosyl)imidazole-4-carboxamide (10-formyl THF route): step 1/1. Its pathway is purine metabolism; IMP biosynthesis via de novo pathway; IMP from 5-formamido-1-(5-phospho-D-ribosyl)imidazole-4-carboxamide: step 1/1. This chain is Bifunctional purine biosynthesis protein PurH, found in Nostoc sp. (strain PCC 7120 / SAG 25.82 / UTEX 2576).